The primary structure comprises 249 residues: 2-C-methyl-D-erythritol 4-phosphate cytidylyltransferase (249 aa).

This sequence belongs to the IspD/TarI cytidylyltransferase family. IspD subfamily.

It catalyses the reaction 2-C-methyl-D-erythritol 4-phosphate + CTP + H(+) = 4-CDP-2-C-methyl-D-erythritol + diphosphate. The protein operates within isoprenoid biosynthesis; isopentenyl diphosphate biosynthesis via DXP pathway; isopentenyl diphosphate from 1-deoxy-D-xylulose 5-phosphate: step 2/6. Functionally, catalyzes the formation of 4-diphosphocytidyl-2-C-methyl-D-erythritol from CTP and 2-C-methyl-D-erythritol 4-phosphate (MEP). The chain is 2-C-methyl-D-erythritol 4-phosphate cytidylyltransferase from Chromohalobacter salexigens (strain ATCC BAA-138 / DSM 3043 / CIP 106854 / NCIMB 13768 / 1H11).